The primary structure comprises 166 residues: UPF0304 protein VC_1871 (166 aa).

This sequence belongs to the UPF0304 family.

This is UPF0304 protein VC_1871 from Vibrio cholerae serotype O1 (strain ATCC 39315 / El Tor Inaba N16961).